The primary structure comprises 173 residues: NADH-ubiquinone oxidoreductase chain 6 (173 aa).

5 helical membrane passes run 1–21 (MTYF…AVAS), 25–45 (PYFA…VLVG), 53–73 (LVLF…SAAL), 87–107 (VLGY…FFWG), and 141–161 (GGML…VLEL).

It belongs to the complex I subunit 6 family.

The protein localises to the mitochondrion membrane. The catalysed reaction is a ubiquinone + NADH + 5 H(+)(in) = a ubiquinol + NAD(+) + 4 H(+)(out). Functionally, core subunit of the mitochondrial membrane respiratory chain NADH dehydrogenase (Complex I) that is believed to belong to the minimal assembly required for catalysis. Complex I functions in the transfer of electrons from NADH to the respiratory chain. The immediate electron acceptor for the enzyme is believed to be ubiquinone. This is NADH-ubiquinone oxidoreductase chain 6 (MT-ND6) from Carassius auratus (Goldfish).